The following is a 178-amino-acid chain: Alkyl hydroperoxide reductase AhpD (178 aa).

The active-site Proton donor is the Cys131. An intrachain disulfide couples Cys131 to Cys134. The active-site Cysteine sulfenic acid (-SOH) intermediate is the Cys134.

It belongs to the AhpD family. In terms of assembly, homotrimer.

It carries out the reaction N(6)-[(R)-dihydrolipoyl]-L-lysyl-[lipoyl-carrier protein] + a hydroperoxide = N(6)-[(R)-lipoyl]-L-lysyl-[lipoyl-carrier protein] + an alcohol + H2O. Antioxidant protein with alkyl hydroperoxidase activity. Required for the reduction of the AhpC active site cysteine residues and for the regeneration of the AhpC enzyme activity. The chain is Alkyl hydroperoxide reductase AhpD from Streptomyces coelicolor (strain ATCC BAA-471 / A3(2) / M145).